A 339-amino-acid chain; its full sequence is Ketol-acid reductoisomerase (NADP(+)) (339 aa).

A KARI N-terminal Rossmann domain is found at methionine 1 to threonine 182. NADP(+) is bound by residues tyrosine 24–glutamine 27, arginine 48, serine 51, threonine 53, and aspartate 83–glutamine 86. Histidine 108 is a catalytic residue. Residue glycine 134 coordinates NADP(+). Residues threonine 183–isoleucine 328 enclose the KARI C-terminal knotted domain. Residues aspartate 191, glutamate 195, glutamate 227, and glutamate 231 each coordinate Mg(2+). Position 252 (serine 252) interacts with substrate.

Belongs to the ketol-acid reductoisomerase family. It depends on Mg(2+) as a cofactor.

The catalysed reaction is (2R)-2,3-dihydroxy-3-methylbutanoate + NADP(+) = (2S)-2-acetolactate + NADPH + H(+). It catalyses the reaction (2R,3R)-2,3-dihydroxy-3-methylpentanoate + NADP(+) = (S)-2-ethyl-2-hydroxy-3-oxobutanoate + NADPH + H(+). Its pathway is amino-acid biosynthesis; L-isoleucine biosynthesis; L-isoleucine from 2-oxobutanoate: step 2/4. The protein operates within amino-acid biosynthesis; L-valine biosynthesis; L-valine from pyruvate: step 2/4. In terms of biological role, involved in the biosynthesis of branched-chain amino acids (BCAA). Catalyzes an alkyl-migration followed by a ketol-acid reduction of (S)-2-acetolactate (S2AL) to yield (R)-2,3-dihydroxy-isovalerate. In the isomerase reaction, S2AL is rearranged via a Mg-dependent methyl migration to produce 3-hydroxy-3-methyl-2-ketobutyrate (HMKB). In the reductase reaction, this 2-ketoacid undergoes a metal-dependent reduction by NADPH to yield (R)-2,3-dihydroxy-isovalerate. This Brucella canis (strain ATCC 23365 / NCTC 10854 / RM-666) protein is Ketol-acid reductoisomerase (NADP(+)).